Here is a 336-residue protein sequence, read N- to C-terminus: UDP-3-O-acylglucosamine N-acyltransferase (336 aa).

His237 functions as the Proton acceptor in the catalytic mechanism.

This sequence belongs to the transferase hexapeptide repeat family. LpxD subfamily. As to quaternary structure, homotrimer.

The catalysed reaction is a UDP-3-O-[(3R)-3-hydroxyacyl]-alpha-D-glucosamine + a (3R)-hydroxyacyl-[ACP] = a UDP-2-N,3-O-bis[(3R)-3-hydroxyacyl]-alpha-D-glucosamine + holo-[ACP] + H(+). It participates in bacterial outer membrane biogenesis; LPS lipid A biosynthesis. In terms of biological role, catalyzes the N-acylation of UDP-3-O-acylglucosamine using 3-hydroxyacyl-ACP as the acyl donor. Is involved in the biosynthesis of lipid A, a phosphorylated glycolipid that anchors the lipopolysaccharide to the outer membrane of the cell. This is UDP-3-O-acylglucosamine N-acyltransferase from Alcanivorax borkumensis (strain ATCC 700651 / DSM 11573 / NCIMB 13689 / SK2).